The primary structure comprises 37 residues: Small ribosomal subunit protein uS19 (37 aa).

The protein belongs to the universal ribosomal protein uS19 family.

The polypeptide is Small ribosomal subunit protein uS19 (RPS15) (Helix lucorum (Snail)).